Reading from the N-terminus, the 175-residue chain is MAEVHVIGQIIGASGFSESSLFCKWGIHTGAAWKLLSGVREGQTQVDTPQIGDMAYWSHPIDLHFATKGLQGWPRLHFQVWSQDSFGRCQLAGYGFCHVPSSPGTHQLACPTWRPLGSWREQLARAFVGGGPQLLHGDTIYSGADRYRLHTAAGGTVHLEIGLLLRNFDRYGVEC.

Positions Ala2 to Ser118 constitute a C2 B9-type domain.

This sequence belongs to the B9D family. In terms of assembly, part of the tectonic-like complex (also named B9 complex). Interacts with TUBG1.

Its subcellular location is the cytoplasm. It localises to the cytoskeleton. The protein localises to the cilium basal body. It is found in the cilium axoneme. The protein resides in the nucleus. Its function is as follows. Component of the tectonic-like complex, a complex localized at the transition zone of primary cilia and acting as a barrier that prevents diffusion of transmembrane proteins between the cilia and plasma membranes. The sequence is that of B9 domain-containing protein 2 (B9D2) from Homo sapiens (Human).